Consider the following 416-residue polypeptide: Gamma-glutamyl phosphate reductase (416 aa).

This sequence belongs to the gamma-glutamyl phosphate reductase family.

The protein resides in the cytoplasm. The enzyme catalyses L-glutamate 5-semialdehyde + phosphate + NADP(+) = L-glutamyl 5-phosphate + NADPH + H(+). Its pathway is amino-acid biosynthesis; L-proline biosynthesis; L-glutamate 5-semialdehyde from L-glutamate: step 2/2. In terms of biological role, catalyzes the NADPH-dependent reduction of L-glutamate 5-phosphate into L-glutamate 5-semialdehyde and phosphate. The product spontaneously undergoes cyclization to form 1-pyrroline-5-carboxylate. The sequence is that of Gamma-glutamyl phosphate reductase from Vibrio vulnificus (strain CMCP6).